The sequence spans 490 residues: Homoserine O-acetyltransferase (490 aa).

The AB hydrolase-1 domain maps to 48 to 354; that stretch reads NVILVCHALT…NSEYGHDAFL (307 aa). Serine 153 serves as the catalytic Nucleophile. Arginine 223 provides a ligand contact to substrate. Catalysis depends on residues aspartate 317 and histidine 350. A substrate-binding site is contributed by aspartate 351. 2 consecutive CBS domains span residues 377 to 434 and 438 to 490; these read MSHT…ANSI and MTKN…LYEK.

Belongs to the AB hydrolase superfamily. MetX family. Homodimer.

The protein resides in the cytoplasm. It carries out the reaction L-homoserine + acetyl-CoA = O-acetyl-L-homoserine + CoA. It functions in the pathway amino-acid biosynthesis; L-methionine biosynthesis via de novo pathway; O-acetyl-L-homoserine from L-homoserine: step 1/1. Transfers an acetyl group from acetyl-CoA to L-homoserine, forming acetyl-L-homoserine. The chain is Homoserine O-acetyltransferase from Methanosphaera stadtmanae (strain ATCC 43021 / DSM 3091 / JCM 11832 / MCB-3).